The primary structure comprises 376 residues: Immunoglobulin G-binding protein H (376 aa).

Residues M1–A41 form the signal peptide. The tract at residues T69 to H271 is disordered. Composition is skewed to basic and acidic residues over residues E72 to Q146, E156 to I203, L211 to I245, and L253 to H271. 3 C repeats span residues Q153–H187, Q195–H229, and Q237–H271. D repeat units follow at residues Q272–E277, A278–E283, A286–E291, and A293–G298. The interval L292–T348 is disordered. The short motif at L342–G346 is the LPXTG sorting signal element. Pentaglycyl murein peptidoglycan amidated threonine is present on T345. Positions G346–N376 are cleaved as a propeptide — removed by sortase.

It belongs to the M protein family.

Its subcellular location is the secreted. It localises to the cell wall. In Streptococcus pyogenes serotype M1, this protein is Immunoglobulin G-binding protein H.